Reading from the N-terminus, the 185-residue chain is Peptidyl-tRNA hydrolase (185 aa).

Tyr14 contacts tRNA. His19 functions as the Proton acceptor in the catalytic mechanism. TRNA-binding residues include Phe64, Asn66, and Asn112.

This sequence belongs to the PTH family. In terms of assembly, monomer.

The protein localises to the cytoplasm. It carries out the reaction an N-acyl-L-alpha-aminoacyl-tRNA + H2O = an N-acyl-L-amino acid + a tRNA + H(+). Functionally, hydrolyzes ribosome-free peptidyl-tRNAs (with 1 or more amino acids incorporated), which drop off the ribosome during protein synthesis, or as a result of ribosome stalling. Catalyzes the release of premature peptidyl moieties from peptidyl-tRNA molecules trapped in stalled 50S ribosomal subunits, and thus maintains levels of free tRNAs and 50S ribosomes. The polypeptide is Peptidyl-tRNA hydrolase (Halalkalibacterium halodurans (strain ATCC BAA-125 / DSM 18197 / FERM 7344 / JCM 9153 / C-125) (Bacillus halodurans)).